Here is a 201-residue protein sequence, read N- to C-terminus: Pyrrolidone-carboxylate peptidase (201 aa).

Residues E81, C143, and H168 contribute to the active site.

This sequence belongs to the peptidase C15 family. In terms of assembly, homotetramer.

Its subcellular location is the cytoplasm. The enzyme catalyses Release of an N-terminal pyroglutamyl group from a polypeptide, the second amino acid generally not being Pro.. In terms of biological role, removes 5-oxoproline from various penultimate amino acid residues except L-proline. The chain is Pyrrolidone-carboxylate peptidase (pcp) from Halalkalibacterium halodurans (strain ATCC BAA-125 / DSM 18197 / FERM 7344 / JCM 9153 / C-125) (Bacillus halodurans).